We begin with the raw amino-acid sequence, 527 residues long: T-complex protein 1 subunit beta (527 aa).

It belongs to the TCP-1 chaperonin family. Heterooligomeric complex of about 850 to 900 kDa that forms two stacked rings, 12 to 16 nm in diameter.

It is found in the cytoplasm. Functionally, molecular chaperone; assists the folding of proteins upon ATP hydrolysis. Known to play a role, in vitro, in the folding of actin and tubulin. This is T-complex protein 1 subunit beta from Arabidopsis thaliana (Mouse-ear cress).